Here is a 547-residue protein sequence, read N- to C-terminus: Methyl-accepting chemotaxis citrate transducer (547 aa).

Residues 1-5 (MKNIK) are Cytoplasmic-facing. A helical membrane pass occupies residues 6–29 (VITGVIATLGIFSALLLVTGILFY). Over 30-189 (SAVSSDRLNF…ASDQNQSSFT (160 aa)) the chain is Periplasmic. Residues 190–213 (QMQWTLGIILLIVLIVLAFIWLGL) form a helical membrane-spanning segment. Residues 214 to 547 (QRVLLRPLQR…AAEQANWESF (334 aa)) lie on the Cytoplasmic side of the membrane. In terms of domain architecture, HAMP spans 215–267 (RVLLRPLQRIMAHIQTIADGDLTHEIEAEGRSEMGQLAAGLKTMQQSLIRTVS). Residues 272–501 (NADSIYTGAG…ESAAAAAALE (230 aa)) enclose the Methyl-accepting transducer domain. Residue Q296 is modified to Glutamate methyl ester (Gln). The residue at position 303 (E303) is a Glutamate methyl ester (Glu). Q310 carries the post-translational modification Glutamate methyl ester (Gln). The disordered stretch occupies residues 317–336 (QNTDNARQATGLAKTASETA). 2 positions are modified to glutamate methyl ester (Glu): E492 and E501. A disordered region spans residues 518-547 (KQPRREASPTTLSKGLTPQPAAEQANWESF).

The protein belongs to the methyl-accepting chemotaxis (MCP) protein family. In terms of processing, methylation level is increased by citrate and decreased by phenol.

It is found in the cell inner membrane. In terms of biological role, acts as a receptor for citrate and mediates taxis away from phenol. Also mediates an attractant response to metal-citrate complexes. The polypeptide is Methyl-accepting chemotaxis citrate transducer (tcp) (Salmonella typhimurium (strain LT2 / SGSC1412 / ATCC 700720)).